We begin with the raw amino-acid sequence, 313 residues long: Glyoxylate/hydroxypyruvate reductase A HPR2 (313 aa).

Residues 152 to 155, 174 to 176, 230 to 232, and Asp256 each bind NADP(+); these read LGRI, SRT, and IGR. Residue Arg232 is part of the active site. Glu261 is a catalytic residue. The active-site Proton donor is His279. NADP(+) is bound at residue 279–281; that stretch reads HVG.

The protein belongs to the D-isomer specific 2-hydroxyacid dehydrogenase family. GyaR subfamily. As to quaternary structure, homodimer.

It is found in the cytoplasm. The catalysed reaction is glycolate + NADP(+) = glyoxylate + NADPH + H(+). It catalyses the reaction (R)-glycerate + NAD(+) = 3-hydroxypyruvate + NADH + H(+). It carries out the reaction (R)-glycerate + NADP(+) = 3-hydroxypyruvate + NADPH + H(+). Its activity is regulated as follows. Strongly inhibited by oxalate. Catalyzes the NADPH-dependent reduction of glyoxylate and hydroxypyruvate (HP) into glycolate and glycerate in the cytoplasm, thus providing a cytosolic bypass to the photorespiratory core cycle. Mostly active in the presence of NADPH and hydroxypyruvate. The polypeptide is Glyoxylate/hydroxypyruvate reductase A HPR2 (HPR2) (Arabidopsis thaliana (Mouse-ear cress)).